Consider the following 419-residue polypeptide: Glutamate dehydrogenase (419 aa).

The active site involves Lys105. Residue 219-225 (GYGNAGY) participates in NAD(+) binding.

This sequence belongs to the Glu/Leu/Phe/Val dehydrogenases family. Homohexamer.

It catalyses the reaction L-glutamate + NAD(+) + H2O = 2-oxoglutarate + NH4(+) + NADH + H(+). The catalysed reaction is L-glutamate + NADP(+) + H2O = 2-oxoglutarate + NH4(+) + NADPH + H(+). In Thermococcus profundus, this protein is Glutamate dehydrogenase (gdhA).